Reading from the N-terminus, the 884-residue chain is Protein argonaute-4 (884 aa).

Positions 242–361 constitute a PAZ domain; it reads PVIEFMCEVL…LPLEVCNIVA (120 aa). One can recognise a Piwi domain in the interval 532 to 843; it reads LIVVILPGKT…VAFRARYHLV (312 aa). The interval 848-870 is disordered; the sequence is DSAEGSHVSGQSNGRDPQALAKA.

It belongs to the argonaute family. Ago subfamily.

The protein localises to the cytoplasm. Its subcellular location is the P-body. Required for RNA-mediated gene silencing (RNAi). Binds to short RNAs such as microRNAs (miRNAs) and represses the translation of mRNAs which are complementary to them. Lacks endonuclease activity and does not appear to cleave target mRNAs. The chain is Protein argonaute-4 (ago4) from Xenopus laevis (African clawed frog).